The sequence spans 55 residues: DNA-directed RNA polymerase subunit Rpo10 (55 aa).

The Zn(2+) site is built by cysteine 6, cysteine 9, cysteine 43, and cysteine 44.

The protein belongs to the archaeal Rpo10/eukaryotic RPB10 RNA polymerase subunit family. Part of the RNA polymerase complex. The cofactor is Zn(2+).

It is found in the cytoplasm. It catalyses the reaction RNA(n) + a ribonucleoside 5'-triphosphate = RNA(n+1) + diphosphate. Functionally, DNA-dependent RNA polymerase (RNAP) catalyzes the transcription of DNA into RNA using the four ribonucleoside triphosphates as substrates. In Methanothermobacter thermautotrophicus (strain ATCC 29096 / DSM 1053 / JCM 10044 / NBRC 100330 / Delta H) (Methanobacterium thermoautotrophicum), this protein is DNA-directed RNA polymerase subunit Rpo10.